The primary structure comprises 99 residues: NADH-quinone oxidoreductase subunit K (99 aa).

3 consecutive transmembrane segments (helical) span residues 2-22, 28-48, and 60-80; these read PVEYYLWLASILFGIGLLGVL, LILMMSVELMLNAANLTFLAF, and IAFFVIAVAAAEAAVGLAVVI.

This sequence belongs to the complex I subunit 4L family. NDH-1 is composed of 14 different subunits. Subunits NuoA, H, J, K, L, M, N constitute the membrane sector of the complex.

It is found in the cell inner membrane. It carries out the reaction a quinone + NADH + 5 H(+)(in) = a quinol + NAD(+) + 4 H(+)(out). Its function is as follows. NDH-1 shuttles electrons from NADH, via FMN and iron-sulfur (Fe-S) centers, to quinones in the respiratory chain. The immediate electron acceptor for the enzyme in this species is believed to be ubiquinone. Couples the redox reaction to proton translocation (for every two electrons transferred, four hydrogen ions are translocated across the cytoplasmic membrane), and thus conserves the redox energy in a proton gradient. The polypeptide is NADH-quinone oxidoreductase subunit K (Anaeromyxobacter dehalogenans (strain 2CP-C)).